We begin with the raw amino-acid sequence, 602 residues long: Elongation factor 4 (602 aa).

Residues 8–189 (KNIRNFSIIA…KIITTIPAPS (182 aa)) enclose the tr-type G domain. GTP contacts are provided by residues 20–25 (DHGKST) and 136–139 (NKID).

Belongs to the TRAFAC class translation factor GTPase superfamily. Classic translation factor GTPase family. LepA subfamily.

It localises to the cell inner membrane. It catalyses the reaction GTP + H2O = GDP + phosphate + H(+). Required for accurate and efficient protein synthesis under certain stress conditions. May act as a fidelity factor of the translation reaction, by catalyzing a one-codon backward translocation of tRNAs on improperly translocated ribosomes. Back-translocation proceeds from a post-translocation (POST) complex to a pre-translocation (PRE) complex, thus giving elongation factor G a second chance to translocate the tRNAs correctly. Binds to ribosomes in a GTP-dependent manner. The chain is Elongation factor 4 from Helicobacter pylori (strain G27).